Consider the following 341-residue polypeptide: UDP-3-O-acylglucosamine N-acyltransferase (341 aa).

His242 serves as the catalytic Proton acceptor.

It belongs to the transferase hexapeptide repeat family. LpxD subfamily. As to quaternary structure, homotrimer.

It carries out the reaction a UDP-3-O-[(3R)-3-hydroxyacyl]-alpha-D-glucosamine + a (3R)-hydroxyacyl-[ACP] = a UDP-2-N,3-O-bis[(3R)-3-hydroxyacyl]-alpha-D-glucosamine + holo-[ACP] + H(+). It functions in the pathway bacterial outer membrane biogenesis; LPS lipid A biosynthesis. Its function is as follows. Catalyzes the N-acylation of UDP-3-O-acylglucosamine using 3-hydroxyacyl-ACP as the acyl donor. Is involved in the biosynthesis of lipid A, a phosphorylated glycolipid that anchors the lipopolysaccharide to the outer membrane of the cell. The sequence is that of UDP-3-O-acylglucosamine N-acyltransferase from Haemophilus influenzae (strain 86-028NP).